Here is a 1468-residue protein sequence, read N- to C-terminus: DNA-directed RNA polymerase subunit beta (1468 aa).

The protein belongs to the RNA polymerase beta chain family. As to quaternary structure, the RNAP catalytic core consists of 2 alpha, 1 beta, 1 beta' and 1 omega subunit. When a sigma factor is associated with the core the holoenzyme is formed, which can initiate transcription.

It catalyses the reaction RNA(n) + a ribonucleoside 5'-triphosphate = RNA(n+1) + diphosphate. DNA-dependent RNA polymerase catalyzes the transcription of DNA into RNA using the four ribonucleoside triphosphates as substrates. This Aquifex aeolicus (strain VF5) protein is DNA-directed RNA polymerase subunit beta.